Here is a 182-residue protein sequence, read N- to C-terminus: Adenine phosphoribosyltransferase (182 aa).

The protein belongs to the purine/pyrimidine phosphoribosyltransferase family. As to quaternary structure, homodimer.

Its subcellular location is the cytoplasm. The catalysed reaction is AMP + diphosphate = 5-phospho-alpha-D-ribose 1-diphosphate + adenine. The protein operates within purine metabolism; AMP biosynthesis via salvage pathway; AMP from adenine: step 1/1. Functionally, catalyzes a salvage reaction resulting in the formation of AMP, that is energically less costly than de novo synthesis. In Koribacter versatilis (strain Ellin345), this protein is Adenine phosphoribosyltransferase.